The chain runs to 326 residues: Undecaprenyl-phosphate 4-deoxy-4-formamido-L-arabinose transferase (326 aa).

Topologically, residues methionine 1–methionine 235 are cytoplasmic. Residues leucine 236–valine 256 form a helical membrane-spanning segment. Residues leucine 257 to glycine 269 lie on the Periplasmic side of the membrane. A helical transmembrane segment spans residues valine 270 to leucine 290. At leucine 291–histidine 326 the chain is on the cytoplasmic side.

This sequence belongs to the glycosyltransferase 2 family.

Its subcellular location is the cell inner membrane. The catalysed reaction is UDP-4-deoxy-4-formamido-beta-L-arabinose + di-trans,octa-cis-undecaprenyl phosphate = 4-deoxy-4-formamido-alpha-L-arabinopyranosyl di-trans,octa-cis-undecaprenyl phosphate + UDP. It functions in the pathway glycolipid biosynthesis; 4-amino-4-deoxy-alpha-L-arabinose undecaprenyl phosphate biosynthesis; 4-amino-4-deoxy-alpha-L-arabinose undecaprenyl phosphate from UDP-4-deoxy-4-formamido-beta-L-arabinose and undecaprenyl phosphate: step 1/2. The protein operates within bacterial outer membrane biogenesis; lipopolysaccharide biosynthesis. Catalyzes the transfer of 4-deoxy-4-formamido-L-arabinose from UDP to undecaprenyl phosphate. The modified arabinose is attached to lipid A and is required for resistance to polymyxin and cationic antimicrobial peptides. The polypeptide is Undecaprenyl-phosphate 4-deoxy-4-formamido-L-arabinose transferase (Escherichia fergusonii (strain ATCC 35469 / DSM 13698 / CCUG 18766 / IAM 14443 / JCM 21226 / LMG 7866 / NBRC 102419 / NCTC 12128 / CDC 0568-73)).